Here is a 299-residue protein sequence, read N- to C-terminus: Junctional adhesion molecule A (299 aa).

Residues methionine 1 to glycine 27 form the signal peptide. 2 consecutive Ig-like V-type domains span residues serine 28 to lysine 125 and proline 135 to arginine 228. Topologically, residues serine 28 to valine 238 are extracellular. Intrachain disulfides connect cysteine 50–cysteine 109 and cysteine 153–cysteine 212. N-linked (GlcNAc...) asparagine glycosylation is present at asparagine 185. Residues isoleucine 239 to phenylalanine 259 traverse the membrane as a helical segment. Residues alanine 260–valine 299 lie on the Cytoplasmic side of the membrane. Phosphoserine occurs at positions 281, 284, and 287.

The protein belongs to the immunoglobulin superfamily. As to quaternary structure, interacts with the ninth PDZ domain of MPDZ. Interacts with the first PDZ domain of PARD3. The association between PARD3 and PARD6B probably disrupts this interaction. Interacts with ITGAL (via I-domain). Interacts with CD151. In terms of assembly, (Microbial infection) Interacts with Mammalian reovirus sigma-1 capsid protein. (Microbial infection) Interacts with Human Rotavirus strain Wa vp4 capsid protein. In terms of processing, N-glycosylated. Post-translationally, (Microbial infection) Cleaved by H.pylori virulence factor PqqE. Cleavage leads to altered tight junction functions. As to expression, expressed in endothelium, epithelium and leukocytes (at protein level).

It localises to the cell junction. The protein localises to the tight junction. It is found in the cell membrane. Its function is as follows. Seems to play a role in epithelial tight junction formation. Appears early in primordial forms of cell junctions and recruits PARD3. The association of the PARD6-PARD3 complex may prevent the interaction of PARD3 with JAM1, thereby preventing tight junction assembly. Plays a role in regulating monocyte transmigration involved in integrity of epithelial barrier. Ligand for integrin alpha-L/beta-2 involved in memory T-cell and neutrophil transmigration. Involved in platelet activation. Functionally, (Microbial infection) Acts as a receptor for Mammalian reovirus sigma-1. (Microbial infection) Acts as a receptor for Human Rotavirus strain Wa. In Homo sapiens (Human), this protein is Junctional adhesion molecule A (F11R).